The following is a 185-amino-acid chain: Ribosome-recycling factor (185 aa).

Belongs to the RRF family.

It is found in the cytoplasm. In terms of biological role, responsible for the release of ribosomes from messenger RNA at the termination of protein biosynthesis. May increase the efficiency of translation by recycling ribosomes from one round of translation to another. This Trichlorobacter lovleyi (strain ATCC BAA-1151 / DSM 17278 / SZ) (Geobacter lovleyi) protein is Ribosome-recycling factor.